We begin with the raw amino-acid sequence, 172 residues long: Adenylate kinase isoenzyme 6 (172 aa).

5 residues coordinate ATP: glycine 13, glycine 15, lysine 16, threonine 17, and threonine 18. The segment at 33-56 (NVGDLAREGQLYDGYDEEYGCPIL) is NMPbind. The LID stretch occupies residues 108 to 118 (TRGYNEKKLQD). Arginine 109 serves as a coordination point for ATP.

It belongs to the adenylate kinase family. AK6 subfamily. As to quaternary structure, monomer and homodimer. Interacts with small ribosomal subunit protein uS11. Not a structural component of 43S pre-ribosomes, but transiently interacts with them by binding to uS11. Interacts with COIL (via C-terminus).

It localises to the cytoplasm. Its subcellular location is the nucleus. It is found in the nucleoplasm. The protein localises to the cajal body. It catalyses the reaction AMP + ATP = 2 ADP. It carries out the reaction ATP + H2O = ADP + phosphate + H(+). Functionally, broad-specificity nucleoside monophosphate (NMP) kinase that catalyzes the reversible transfer of the terminal phosphate group between nucleoside triphosphates and monophosphates. Also has ATPase activity. Involved in the late cytoplasmic maturation steps of the 40S ribosomal particles, specifically 18S rRNA maturation. While NMP activity is not required for ribosome maturation, ATPase activity is. Associates transiently with small ribosomal subunit protein uS11. ATP hydrolysis breaks the interaction with uS11. May temporarily remove uS11 from the ribosome to enable a conformational change of the ribosomal RNA that is needed for the final maturation step of the small ribosomal subunit. Its NMP activity may have a role in nuclear energy homeostasis. May be involved in regulation of Cajal body (CB) formation. This chain is Adenylate kinase isoenzyme 6, found in Mus musculus (Mouse).